The primary structure comprises 2540 residues: MAVETRAELVGKRFLCVAVGDEARSERWESGRGWRSWRAGVIRAVSHRDSRNPDLAVYVEFDDLEWDKREWVKVYEDFSTFLVEYHLIWAKRNDPSQTQGSKSKQIQWPALTFKPLVERNIPSSVTAVEFLVDKQLDFLTEDSAFQPYQDDIDSLNPVLRDNPQLHEEVKVWVKEQKVQEIFMQGPYSLNGYRVRVYRQDSATQWFTGIITHHDLFTRTMIVMNDQVLEPQNVDPSMVQMTFLDDVVHSLLKGENIGITSRRRSRANQNVNAVHSHYTRAQANSPRPAMNSQAAVPKQNTHQQQQQRSIRPNKRKGSDSSIPDEEKMKEEKYDYISRGENPKGKNKHLMNKRRKPEEDEKKLNMKRLRTDNVSDFSESSDSENSNKRIIDNSSEQKPENELKNKNTSKINGEEGKPHNNEKAGEETLKNSQPPWDQIQEDKKHEEAEKRKSVDTQLQEDMIIHSSEQSTVSDHNSNDLLPQECNMDKTHTMELLPKEKFVSRPPTPKCVIDITNDTNLEKVAQENSSTFGLQTLQKMDPNVSDSKHSIANAKFLETAKKDSDQSWVSDVVKVDLTQSSVTNASSGNDHLNMEKEKYVSYISPLSAVSVMEDKLHKRSPPPETIKSKLNTSVDTHKIKSSPSPEVVKPKITHSPDSVKSKATYVNSQATGERRLANKIEHELSRCSFHPIPTRSSTLETTKSPLIIDKNEHFTVYRDPALIGSETGANHISPFLSQHPFPLHSSSHRTCLNPGTHHPALTPAPHLLAGSSSQTPLPTINTHPLTSGPHHAVHHPHLLPTVLPGVPTASLLGGHPRLESAHASSLSHLALAHQQQQQLLQHQSPHLLGQAHPSASYNQLGLYPIIWQYPNGTHAYSGLGLPSSKWVHPENAVNAEASLRRNSPSPWLHQPTPVTSADGIGLLSHIPVRPSSAEPHRPLKITAHSSPPLTKTLVDHHKEELERKAFMEPLRSVASTSAKNDLDLNRSQTGKDCHLHRHFVDPVLNQLQRPPQETGERLNKYKEEHRRILQESIDVAPFTTKIKGLEGERENYSRVASSSSSPKSHIIKQDMDVERSVSDLYKMKHSVPQSLPQSNYFTTLSNSVVNEPPRSYPSKEVSNIYGDKQSNALAAAAANPQTLTSFITSLSKPPPLIKHQPESEGLVGKIPEHLPHQIASHSVTTFRNDCRSPTHLTVSSTNTLRSMPALHRAPVFHPPIHHSLERKEGSYSSLSPPTLTPVMPVNAGGKVQESQKPPTLIPEPKDSQANFKSSSEQSLTEMWRPNNNLSKEKTEWHVEKSSGKLQAAMASVIVRPSSSTKTDSMPAMQLASKDRVSERSSAGAHKTDCLKLAEAGETGRIILPNVNSDSVHTKSEKNFQAVSQGSVPSSVMSAVNTMCNTKTDVITSAADTTSVSSWGGSEVISSLSNTILASTSSECVSSKSVSQPVAQKQECKVSTTAPVTLASSKTGSVVQPSSGFSGTTDFIHLKKHKAALAAAQYKSSNASETEPNAIKNQTLSASLPLDSTVICSTINKANSVGNGQASQTSQPNYHTKLKKAWLTRHSEEDKNTNKMENSGNSVSEIIKPCSVNLIASTSSDIQNSVDSKIIVDKYVKDDKVNRRKAKRTYESGSESGDSDESESKSEQRTKRQPKPTYKKKQNDLQKRKGEIEEDLKPNGVLSRSAKERSKLKLQSNSNTGIPRSVLKDWRKVKKLKQTGESFLQDDSCCEIGPNLQKCRECRLIRSKKGEEPAHSPVFCRFYYFRRLSFSKNGVVRIDGFSSPDQYDDEAMSLWTHENFEDDELDIETSKYILDIIGDKFCQLVTSEKTALSWVKKDAKIAWKRAVRGVREMCDACEATLFNIHWVCQKCGFVVCLDCYKAKERKSSRDKELYAWMKCVKGQPHDHKHLMPTQIIPGSVLTDLLDAMHTLREKYGIKSHCHCTNKQNLQVGNFPTMNGVSQVLQNVLNHSNKISLCMPESQQQNTPPKSEKNGGSSPESDVGTDNKLTPPESQSPLHWLADLAEQKAREEKKENKELTLENQIKEEREQDNSESPNGRTSPLVSQNNEQGSTLRDLLTTTAGKLRVGSTDAGIAFAPVYSMGAPSSKSGRTMPNILDDIIASVVENKIPPSKTSKINVKPELKEEPEESIISAVDENNKLYSDIPHSWICEKHILWLKDYKNSSNWKLFKECWKQGQPAVVSGVHKKMNISLWKAESISLDFGDHQADLLNCKDSIISNANVKEFWDGFEEVSKRQKNKSGETVVLKLKDWPSGEDFKTMMPARYEDLLKSLPLPEYCNPEGKFNLASHLPGFFVRPDLGPRLCSAYGVVAAKDHDIGTTNLHIEVSDVVNILVYVGIAKGNGILSKAGILKKFEEEDLDDILRKRLKDSSEIPGALWHIYAGKDVDKIREFLQKISKEQGLEVLPEHDPIRDQSWYVNKKLRQRLLEEYGVRTCTLIQFLGDAIVLPAGALHQVQNFHSCIQVTEDFVSPEHLVESFHLTQELRLLKEEINYDDKLQVKNILYHAVKEMVRALKIHEDEVEDMEEN.

A compositionally biased stretch (polar residues) spans 278 to 309 (TRAQANSPRPAMNSQAAVPKQNTHQQQQQRSI). The disordered stretch occupies residues 278-478 (TRAQANSPRP…TVSDHNSNDL (201 aa)). Phosphoserine is present on residues Ser-317 and Ser-320. Over residues 323–342 (DEEKMKEEKYDYISRGENPK) the composition is skewed to basic and acidic residues. Over residues 343 to 353 (GKNKHLMNKRR) the composition is skewed to basic residues. Residues 354–371 (KPEEDEKKLNMKRLRTDN) are compositionally biased toward basic and acidic residues. Phosphoserine is present on residues Ser-373 and Ser-376. The segment covering 373-382 (SDFSESSDSE) has biased composition (low complexity). Basic and acidic residues-rich tracts occupy residues 383-403 (NSNK…ELKN), 410-427 (NGEE…EETL), and 438-452 (QEDK…RKSV). Positions 464–478 (SSEQSTVSDHNSNDL) are enriched in polar residues. Phosphoserine occurs at positions 475 and 501. Thr-505 carries the post-translational modification Phosphothreonine. 7 positions are modified to phosphoserine: Ser-601, Ser-617, Ser-638, Ser-639, Ser-641, Ser-652, and Ser-943. Positions 631-656 (VDTHKIKSSPSPEVVKPKITHSPDSV) are disordered. Disordered regions lie at residues 1242–1263 (GKVQ…SQAN) and 1614–1692 (NRRK…NSNT). Over residues 1643–1652 (KRQPKPTYKK) the composition is skewed to basic residues. A compositionally biased stretch (basic and acidic residues) spans 1653–1669 (KQNDLQKRKGEIEEDLK). A C6-type zinc finger spans residues 1846 to 1871 (CDACEATLFNIHWVCQKCGFVVCLDC). A compositionally biased stretch (polar residues) spans 1971–1991 (PESQQQNTPPKSEKNGGSSPE). The tract at residues 1971–2064 (PESQQQNTPP…LVSQNNEQGS (94 aa)) is disordered. Residue Ser-1989 is modified to Phosphoserine. Residues 2016-2043 (AEQKAREEKKENKELTLENQIKEEREQD) are compositionally biased toward basic and acidic residues. The span at 2045–2064 (SESPNGRTSPLVSQNNEQGS) shows a compositional bias: polar residues. Residues 2066 to 2070 (LRDLL) carry the LXXLL motif motif. Glycyl lysine isopeptide (Lys-Gly) (interchain with G-Cter in SUMO2) cross-links involve residues Lys-2132 and Lys-2136. The region spanning 2274 to 2498 (MPARYEDLLK…ESFHLTQELR (225 aa)) is the JmjC domain. Positions 2336, 2338, and 2466 each coordinate Fe cation.

Belongs to the JHDM2 histone demethylase family. As to quaternary structure, interacts specifically with the ligand-binding domain of the thyroid receptor (TR). Requires the presence of thyroid hormone for its interaction. Fe(2+) serves as cofactor.

It localises to the nucleus. Functionally, probable histone demethylase that specifically demethylates 'Lys-9' of histone H3, thereby playing a central role in histone code. Demethylation of Lys residue generates formaldehyde and succinate. May be involved in hormone-dependent transcriptional activation, by participating in recruitment to androgen-receptor target genes. This chain is Probable JmjC domain-containing histone demethylation protein 2C (JMJD1C), found in Homo sapiens (Human).